An 812-amino-acid chain; its full sequence is Lon protease (812 aa).

One can recognise a Lon N-terminal domain in the interval 11-204 (IPVLPLRDVV…YLMAMMESEI (194 aa)). 356-363 (GPPGVGKT) is an ATP binding site. Residues 592 to 773 (ENRVGQVTGL…EEEQTLSLQN (182 aa)) form the Lon proteolytic domain. Active-site residues include Ser679 and Lys722. The span at 745-764 (KENPDNAKADQDRHPVKNNE) shows a compositional bias: basic and acidic residues. The segment at 745 to 766 (KENPDNAKADQDRHPVKNNEEE) is disordered.

It belongs to the peptidase S16 family. As to quaternary structure, homohexamer. Organized in a ring with a central cavity. ATP binding and hydrolysis do not affect the oligomeric state of the enzyme.

The protein resides in the cytoplasm. The enzyme catalyses Hydrolysis of proteins in presence of ATP.. Its activity is regulated as follows. Contains an allosteric site (distinct from its active site), whose occupancy by an unfolded polypeptide leads to enzyme activation. Functionally, ATP-dependent serine protease that mediates the selective degradation of mutant and abnormal proteins as well as certain short-lived regulatory proteins. Required for cellular homeostasis and for survival from DNA damage and developmental changes induced by stress. Degrades polypeptides processively to yield small peptide fragments that are 5 to 10 amino acids long. Binds to DNA in a double-stranded, site-specific manner. Endogenous substrates include the regulatory proteins RcsA and SulA, the transcriptional activator SoxS, and UmuD. Its overproduction specifically inhibits translation through at least two different pathways, one of them being the YoeB-YefM toxin-antitoxin system. This Shigella dysenteriae serotype 1 (strain Sd197) protein is Lon protease.